The primary structure comprises 326 residues: Isoaspartyl peptidase/L-asparaginase (326 aa).

Threonine 185 acts as the Nucleophile in catalysis. Substrate-binding positions include 213-216 (RVGD) and 236-239 (TGHG).

Belongs to the Ntn-hydrolase family. Heterodimer of an alpha and beta chain produced by autocleavage. This heterodimer may then dimerize in turn, giving rise to a heterotetramer. Cleaved into an alpha and beta chain by autocatalysis; this activates the enzyme. The N-terminal residue of the beta subunit is responsible for the nucleophile hydrolase activity. In terms of tissue distribution, high expression in the heart and brain while low to minimal expression in the other tissues. In ocular tissues, high levels is observed in the optic nerve and retina while relatively low levels of expression are detected in the iris-ciliary body, lens or retinal pigment epithelium.

It is found in the cytoplasm. The catalysed reaction is L-asparagine + H2O = L-aspartate + NH4(+). It carries out the reaction Cleavage of a beta-linked Asp residue from the N-terminus of a polypeptide.. Its function is as follows. Has both L-asparaginase and beta-aspartyl peptidase activity. May be involved in the production of L-aspartate, which can act as an excitatory neurotransmitter in some brain regions. Is highly active with L-Asp beta-methyl ester. Besides, has catalytic activity toward beta-aspartyl dipeptides and their methyl esters, including beta-L-Asp-L-Phe, beta-L-Asp-L-Phe methyl ester (aspartame), beta-L-Asp-L-Ala, beta-L-Asp-L-Leu and beta-L-Asp-L-Lys. Does not have aspartylglucosaminidase activity and is inactive toward GlcNAc-L-Asn. Likewise, has no activity toward glutamine. In Mus musculus (Mouse), this protein is Isoaspartyl peptidase/L-asparaginase (Asrgl1).